The sequence spans 518 residues: Xaa-Pro aminopeptidase 3 (518 aa).

The N-terminal 48 residues, 1–48, are a transit peptide targeting the mitochondrion; it reads MNNICKLNKFIISKSSSSLSSTSSKIKTNCLIKNAKMFSSSLNLNRFY. Positions 314, 345, 356, 434, 441, 461, and 485 each coordinate substrate. Residues D345, D356, and H434 each coordinate Mn(2+). The Mn(2+) site is built by E461 and E485.

It belongs to the peptidase M24B family. In terms of assembly, homodimer. Mn(2+) is required as a cofactor.

It localises to the mitochondrion. The protein resides in the cytoplasm. It catalyses the reaction Release of any N-terminal amino acid, including proline, that is linked to proline, even from a dipeptide or tripeptide.. In terms of biological role, catalyzes the removal of a penultimate prolyl residue from the N-termini of peptides, such as Leu-Pro-Ala. Also shows low activity towards peptides with Ala or Ser at the P1 position. In Dictyostelium discoideum (Social amoeba), this protein is Xaa-Pro aminopeptidase 3 (xpnpep3).